Reading from the N-terminus, the 284-residue chain is Lipoyl synthase (284 aa).

Residues Cys36, Cys41, Cys47, Cys62, Cys66, Cys69, and Ser273 each contribute to the [4Fe-4S] cluster site. Positions 48–262 (WGKGTATFMI…RTIGLKKGFR (215 aa)) constitute a Radical SAM core domain.

Belongs to the radical SAM superfamily. Lipoyl synthase family. [4Fe-4S] cluster is required as a cofactor.

The protein localises to the cytoplasm. It carries out the reaction [[Fe-S] cluster scaffold protein carrying a second [4Fe-4S](2+) cluster] + N(6)-octanoyl-L-lysyl-[protein] + 2 oxidized [2Fe-2S]-[ferredoxin] + 2 S-adenosyl-L-methionine + 4 H(+) = [[Fe-S] cluster scaffold protein] + N(6)-[(R)-dihydrolipoyl]-L-lysyl-[protein] + 4 Fe(3+) + 2 hydrogen sulfide + 2 5'-deoxyadenosine + 2 L-methionine + 2 reduced [2Fe-2S]-[ferredoxin]. It functions in the pathway protein modification; protein lipoylation via endogenous pathway; protein N(6)-(lipoyl)lysine from octanoyl-[acyl-carrier-protein]: step 2/2. In terms of biological role, catalyzes the radical-mediated insertion of two sulfur atoms into the C-6 and C-8 positions of the octanoyl moiety bound to the lipoyl domains of lipoate-dependent enzymes, thereby converting the octanoylated domains into lipoylated derivatives. This is Lipoyl synthase from Phocaeicola vulgatus (strain ATCC 8482 / DSM 1447 / JCM 5826 / CCUG 4940 / NBRC 14291 / NCTC 11154) (Bacteroides vulgatus).